Consider the following 1077-residue polypeptide: Carbamoyl phosphate synthase large chain (1077 aa).

The interval 1-403 is carboxyphosphate synthetic domain; it reads MPKRTDIQSI…SLHKALRGLE (403 aa). ATP contacts are provided by R129, R169, G175, G176, E208, L210, E215, G241, I242, H243, Q285, and E299. Residues 133–328 form the ATP-grasp 1 domain; that stretch reads DKAMKSIGLE…IAKIAAKLAV (196 aa). The Mg(2+) site is built by Q285, E299, and N301. The Mn(2+) site is built by Q285, E299, and N301. Residues 404-553 are oligomerization domain; the sequence is VGATGFDEMV…YSSYDEECEA (150 aa). The carbamoyl phosphate synthetic domain stretch occupies residues 554–935; sequence NPTDKDKIMV…AYAKAELGCG (382 aa). Residues 678–869 form the ATP-grasp 2 domain; the sequence is QAAVERLGLL…LAKIAARVMA (192 aa). ATP-binding residues include R714, R753, L755, E760, G785, V786, H787, S788, Q828, and E840. Q828, E840, and N842 together coordinate Mg(2+). Mn(2+)-binding residues include Q828, E840, and N842. The 142-residue stretch at 936–1077 folds into the MGS-like domain; it reads SVYPEGGRAL…HAKVKASLEA (142 aa). Residues 936-1077 form an allosteric domain region; that stretch reads SVYPEGGRAL…HAKVKASLEA (142 aa).

It belongs to the CarB family. In terms of assembly, composed of two chains; the small (or glutamine) chain promotes the hydrolysis of glutamine to ammonia, which is used by the large (or ammonia) chain to synthesize carbamoyl phosphate. Tetramer of heterodimers (alpha,beta)4. Requires Mg(2+) as cofactor. Mn(2+) is required as a cofactor.

The catalysed reaction is hydrogencarbonate + L-glutamine + 2 ATP + H2O = carbamoyl phosphate + L-glutamate + 2 ADP + phosphate + 2 H(+). It catalyses the reaction hydrogencarbonate + NH4(+) + 2 ATP = carbamoyl phosphate + 2 ADP + phosphate + 2 H(+). It functions in the pathway amino-acid biosynthesis; L-arginine biosynthesis; carbamoyl phosphate from bicarbonate: step 1/1. It participates in pyrimidine metabolism; UMP biosynthesis via de novo pathway; (S)-dihydroorotate from bicarbonate: step 1/3. Large subunit of the glutamine-dependent carbamoyl phosphate synthetase (CPSase). CPSase catalyzes the formation of carbamoyl phosphate from the ammonia moiety of glutamine, carbonate, and phosphate donated by ATP, constituting the first step of 2 biosynthetic pathways, one leading to arginine and/or urea and the other to pyrimidine nucleotides. The large subunit (synthetase) binds the substrates ammonia (free or transferred from glutamine from the small subunit), hydrogencarbonate and ATP and carries out an ATP-coupled ligase reaction, activating hydrogencarbonate by forming carboxy phosphate which reacts with ammonia to form carbamoyl phosphate. This is Carbamoyl phosphate synthase large chain from Vibrio parahaemolyticus serotype O3:K6 (strain RIMD 2210633).